A 432-amino-acid chain; its full sequence is Lipid-A-disaccharide synthase (432 aa).

Residues 1 to 11 are compositionally biased toward polar residues; sequence MTGIGNQTSGI. Positions 1-35 are disordered; it reads MTGIGNQTSGIETGVHDRAPADGEPTALPISHSPL.

The protein belongs to the LpxB family.

The catalysed reaction is a lipid X + a UDP-2-N,3-O-bis[(3R)-3-hydroxyacyl]-alpha-D-glucosamine = a lipid A disaccharide + UDP + H(+). It functions in the pathway bacterial outer membrane biogenesis; LPS lipid A biosynthesis. In terms of biological role, condensation of UDP-2,3-diacylglucosamine and 2,3-diacylglucosamine-1-phosphate to form lipid A disaccharide, a precursor of lipid A, a phosphorylated glycolipid that anchors the lipopolysaccharide to the outer membrane of the cell. The chain is Lipid-A-disaccharide synthase from Xanthomonas oryzae pv. oryzae (strain MAFF 311018).